We begin with the raw amino-acid sequence, 177 residues long: Large ribosomal subunit protein uL6 (177 aa).

This sequence belongs to the universal ribosomal protein uL6 family. As to quaternary structure, part of the 50S ribosomal subunit.

In terms of biological role, this protein binds to the 23S rRNA, and is important in its secondary structure. It is located near the subunit interface in the base of the L7/L12 stalk, and near the tRNA binding site of the peptidyltransferase center. This Methylobacillus flagellatus (strain ATCC 51484 / DSM 6875 / VKM B-1610 / KT) protein is Large ribosomal subunit protein uL6.